Here is a 339-residue protein sequence, read N- to C-terminus: ADP,ATP carrier protein (339 aa).

Solcar repeat units follow at residues 39-133 (MAFV…IKGL), 145-234 (RFFV…AKGV), and 246-328 (AKWA…IKKF). 5 helical membrane-spanning segments follow: residues 41-70 (FVKD…LLLQ), 110-134 (LANV…KGLF), 144-164 (WRFF…SLLI), 212-232 (VSVQ…DTAK), and 245-265 (FAKW…SYPF). ADP-binding residues include R115 and K127. ADP is bound at residue R269. Positions 269-274 (RRRLMM) are important for transport activity. Positions 269–274 (RRRLMM) match the Nucleotide carrier signature motif motif. A helical membrane pass occupies residues 305 to 322 (AWSNVLRGAGGAFVLVLY).

It belongs to the mitochondrial carrier (TC 2.A.29) family. As to quaternary structure, monomer.

Its subcellular location is the mitochondrion inner membrane. It carries out the reaction ADP(in) + ATP(out) = ADP(out) + ATP(in). With respect to regulation, the matrix-open state (m-state) is inhibited by the membrane-permeable bongkrekic acid (BKA). The cytoplasmic-open state (c-state) is inhibited by the membrane-impermeable toxic inhibitor carboxyatractyloside (CATR). In terms of biological role, ADP:ATP antiporter that mediates import of ADP into the mitochondrial matrix for ATP synthesis, and export of ATP out to fuel the cell. Cycles between the cytoplasmic-open state (c-state) and the matrix-open state (m-state): operates by the alternating access mechanism with a single substrate-binding site intermittently exposed to either the cytosolic (c-state) or matrix (m-state) side of the inner mitochondrial membrane. This Parachlorella kessleri (Green alga) protein is ADP,ATP carrier protein.